The sequence spans 329 residues: Probable fructokinase-2 (329 aa).

This sequence belongs to the carbohydrate kinase PfkB family.

It carries out the reaction D-fructose + ATP = D-fructose 6-phosphate + ADP + H(+). The protein operates within glycan biosynthesis; starch biosynthesis. May play an important role in maintaining the flux of carbon towards starch formation. This Arabidopsis thaliana (Mouse-ear cress) protein is Probable fructokinase-2.